A 505-amino-acid polypeptide reads, in one-letter code: uncharacterized protein (505 aa).

The segment at 1-52 is disordered; sequence MVDGSIHVPVQSHEGQHDNSSSLNEEIQTSQDPLGIVESYQESSTSDFDKSH. A compositionally biased stretch (polar residues) spans 18–32; that stretch reads DNSSSLNEEIQTSQD. Transmembrane regions (helical) follow at residues 141–161, 173–193, 208–228, 235–255, 265–285, 290–310, 326–346, 362–382, 389–409, and 415–435; these read FWIVFFLGQVLSLCITATNTF, AFQTFLVYALLTLVYTPYTVF, GWKYIIFAFFDVEGNYFVVLA, LSASLLDSWATVAVVILSFIF, ILGVVACIGGLVLLVVSDVIS, SAVNPGLGDGYMIIGATCYGV, VVIGQLSLYGSIISIIQTFIF, GYLAGFILVMFLLYSLAPILF, FYNISLLTSDFWSLVIGIHVF, and WLYPIAFVLIILGLFVYHVFV. Phosphoserine occurs at positions 463, 466, and 467.

This sequence belongs to the SLC35F solute transporter family.

The protein resides in the golgi apparatus membrane. This is an uncharacterized protein from Schizosaccharomyces pombe (strain 972 / ATCC 24843) (Fission yeast).